We begin with the raw amino-acid sequence, 104 residues long: Translation initiation factor 1A (104 aa).

A compositionally biased stretch (low complexity) spans M1–V14. Positions M1–N20 are disordered. One can recognise an S1-like domain in the interval T12–T87.

Belongs to the eIF-1A family.

Its function is as follows. Seems to be required for maximal rate of protein biosynthesis. Enhances ribosome dissociation into subunits and stabilizes the binding of the initiator Met-tRNA(I) to 40 S ribosomal subunits. The protein is Translation initiation factor 1A (eIF1A) of Methanococcus maripaludis (strain C6 / ATCC BAA-1332).